Here is a 670-residue protein sequence, read N- to C-terminus: Proline-rich receptor-like protein kinase PERK5 (670 aa).

A disordered region spans residues 1–181 (MADSPVDSSP…SGDSDSSSGN (181 aa)). The Extracellular segment spans residues 1–186 (MADSPVDSSP…SSSGNHPQAN (186 aa)). Over residues 14–31 (TSNGTPPSNGTSPSNESS) the composition is skewed to low complexity. 2 N-linked (GlcNAc...) asparagine glycosylation sites follow: Asn-22 and Asn-28. 2 stretches are compositionally biased toward pro residues: residues 32–62 (PPTPPSSPPPSSISAPPPDISASFSPPPAPP) and 84–109 (PQTPENPSPPAPEGSTPVTPPAPPQT). N-linked (GlcNAc...) asparagine glycosylation occurs at Asn-130. Residues 132–141 (TNGGNNNRDG) are compositionally biased toward low complexity. N-linked (GlcNAc...) asparagine glycosylation occurs at Asn-151. Positions 167 to 181 (SPPQNSGDSDSSSGN) are enriched in low complexity. A helical membrane pass occupies residues 187 to 207 (IGLIIGVLVGAGLLLLLAVCI). Topologically, residues 208–670 (CICCNRKKKK…RGSMKRNPQL (463 aa)) are cytoplasmic. A Phosphothreonine modification is found at Thr-301. Residues 312 to 590 (FAQSNLLGQG…VRALEGDMSM (279 aa)) enclose the Protein kinase domain. ATP is bound by residues 318–326 (LGQGGFGYV) and Lys-340. At Tyr-385 the chain carries Phosphotyrosine. Asp-436 acts as the Proton acceptor in catalysis. Position 469 is a phosphoserine (Ser-469). Residues Thr-470 and Thr-475 each carry the phosphothreonine modification. Position 483 is a phosphotyrosine (Tyr-483). Disordered regions lie at residues 589–613 (SMDDLSEGTRPGQSTYLSPGSVSSE) and 635–670 (EYQSSEYGGTSEYGLNPSASSSEEMNRGSMKRNPQL). Positions 599–613 (PGQSTYLSPGSVSSE) are enriched in polar residues.

Belongs to the protein kinase superfamily. Ser/Thr protein kinase family. Mostly expressed in flower buds.

The protein resides in the cell membrane. It carries out the reaction L-seryl-[protein] + ATP = O-phospho-L-seryl-[protein] + ADP + H(+). The catalysed reaction is L-threonyl-[protein] + ATP = O-phospho-L-threonyl-[protein] + ADP + H(+). This is Proline-rich receptor-like protein kinase PERK5 (PERK5) from Arabidopsis thaliana (Mouse-ear cress).